The following is an 881-amino-acid chain: MAKKTTPMMEQYQKVKDQYPDAFLFYRLGDFYELFNDDAVKGAQLLELTLTTRNHSAKNPIPMCGVPHRAVNNYIDILIDKGYKVAICEQMEDPKKAKGMVKRAVTRLITPGTQMDLNGEQARDNNYLAAISGQNGVFSIAYTDLSTGELKTTSLNNANDAVNELVNLQSKEVVVDGELPVEITTQFKQRNILQSHQPTVLKNAEISYLTQDLDDQAQQHVVALLVSYLLTTQKRSLAHMQKAIAYQPSSFMKIDHYSKTNLELMRNMRSGKRQGTLAWLLDETKTAMGSRLLKRWIDRPLINQNAISERQDKVQELLDHYFERSNLQQELIKVYDLERLAGRVAYGSVNGRDLIQLKTSLKQVPKIKYVLETLDSPVFEELQKQLDPLDDVADLIDQSIIEEPPIAVTEGGVIKDGYNDQLDQYRDAMNNGKQWIVDLQEHERKLTGINNLKIGYNHVFGYYIEVTKVNLDKLPKDRYERKQTLVNAERFSTPELKEKEALIMGAQEKSTALEYDIFVKIREQVKGQITRLQKLAQQLAELDVLQSFAVVSEDYHFVRPEMNTGHVLKIKDGRHPVVEKFMGHQEYVPNDVLMGEDTDILLITGPNMSGKSTYMRQLALIAVMAQIGCFVPAKSAELPIFDQVFTRIGAADDLISGESTFMVEMMEANNALTHATDRSLILFDEIGRGTATYDGMALAQAIIEYVHQHVRAKTLFSTHYHELTALENSLARLKNVHVGATEKDGELVFLHKVSAGPADKSYGIHVAKLAGMPSSLLKRADTILQKLEQKDVKLPNTPKPATDNYHTEPISAKINEAAPVKKEAAPVVEDNGQLELFATQPEKKESSVDRRILHQLKELNLMGMTPMDVMNQIYKWQQKLK.

605–612 lines the ATP pocket; it reads GPNMSGKS.

This sequence belongs to the DNA mismatch repair MutS family.

Its function is as follows. This protein is involved in the repair of mismatches in DNA. It is possible that it carries out the mismatch recognition step. This protein has a weak ATPase activity. In Limosilactobacillus reuteri subsp. reuteri (strain JCM 1112) (Lactobacillus reuteri), this protein is DNA mismatch repair protein MutS.